Here is a 1732-residue protein sequence, read N- to C-terminus: Transient receptor potential cation channel subfamily M member 3 (1732 aa).

Residues 1 to 894 (MPEPWGTVYF…RKIYEFYNAP (894 aa)) lie on the Cytoplasmic side of the membrane. Calmodulin-binding stretches follow at residues 192-215 (NFEL…MTTG), 300-323 (TGKY…QKIN), 601-624 (RKRF…KLLG), and 793-816 (RKNS…LEFK). A required for the inhibitory action of G-beta/gamma-subunits of heterotrimeric G-proteins region spans residues 617–625 (PKALKLLGM). 1,2-dioctanoyl-sn-glycero-3-phospho-(1D-myo-inositol-4,5-bisphosphate) is bound at residue S796. Residues 895-918 (IVKFWFYTLAYIGYLMLFNYIVLV) form a helical membrane-spanning segment. Over 919–925 (KMERWPS) the chain is Extracellular. A helical membrane pass occupies residues 926-948 (TQEWIVISYIFTLGIEKMREILM). Residues 949–964 (SEPGKLLQKVKVWLQE) are Cytoplasmic-facing. Residues 965-985 (YWNVTDLIAILLFSVGMILRL) form a helical membrane-spanning segment. Residues 986–989 (QDQP) lie on the Extracellular side of the membrane. The chain crosses the membrane as a helical span at residues 990-1013 (FRSDGRVIYCVNIIYWYIRLLDIF). Topologically, residues 1014-1028 (GVNKYLGPYVMMIGK) are cytoplasmic. K1017 and Y1018 together coordinate 1,2-dioctanoyl-sn-glycero-3-phospho-(1D-myo-inositol-4,5-bisphosphate). A helical membrane pass occupies residues 1029–1056 (MMIDMMYFVIIMLVVLMSFGVARQAILF). The Extracellular portion of the chain corresponds to 1057 to 1111 (PNEEPSWKLAKNIFYMPYWMIYGEVFADQIDPPCGQNETREDGKIIQLPPCKTGA). A helical membrane pass occupies residues 1112-1137 (WIVPAIMACYLLVANILLVNLLIAVF). Residues 1138-1732 (NNTFFEVKSI…AFQSFESKHN (595 aa)) lie on the Cytoplasmic side of the membrane. Positions 1241-1301 (ERIRVTSERV…LERLTGLERA (61 aa)) form a coiled coil. Over residues 1459–1476 (PVPSTAPSSSAYATLAPT) the composition is skewed to low complexity. Disordered stretches follow at residues 1459 to 1478 (PVPS…PTDR) and 1611 to 1732 (REAE…SKHN). Composition is skewed to polar residues over residues 1635 to 1653 (AISS…NNIT), 1690 to 1701 (NTASLRNPFQRS), and 1720 to 1732 (RTSA…SKHN).

This sequence belongs to the transient receptor (TC 1.A.4) family. LTrpC subfamily. TRPM3 sub-subfamily. As to quaternary structure, homotetramer. Interacts with TRPM1; the interaction results in the formation of a heteromultimeric cation channel complex that are functionally different from the homomeric channels. As to expression, expressed primarily in the kidney and, at lower levels, in brain, testis, ovary, pancreas and spinal cord. Expression in the brain and kidney was determined at protein level. In the kidney, expressed predominantly in the collecting tubular epithelium in the medulla, medullary rays, and periglomerular regions; in the brain, highest levels are found in the cerebellum, choroid plexus, the locus coeruleus, the posterior thalamus and the substantia nigra. Down-regulated in renal tumors compared to normal kidney. Expressed in the lens.

It localises to the cell membrane. The catalysed reaction is Ca(2+)(in) = Ca(2+)(out). It catalyses the reaction Mn(2+)(in) = Mn(2+)(out). The enzyme catalyses Zn(2+)(in) = Zn(2+)(out). It carries out the reaction Mg(2+)(in) = Mg(2+)(out). Activated by the neurosteroid pregnelonone sulfate (PregS); PregS activates the channel by shifting its current-voltage activation curve toward more negative membrane potentials and also potentiates temperature-induced activation. Activated by sphingosine. Activated by heat. Intracellular Ca(2+) inhibits TRPM3 probably via interaction with Ca(2+)/calmodulin. Intracellular Mg(2+) inhibits TRPM3 activity. Both intracellular and extracellular protons block TRPM3 through propable binding sites in the pore region. Positively regulated by phosphoinositide phosphoinositol 4,5-biphosphate (PI(4,5)P2). Strongly inhibited by activation of G(i)-coupled receptors via direct binding with G-betagamma-subunits of heterotrimeric G-proteins. In terms of biological role, constitutively active, non-selective divalent cation-conducting channel that is permeable to Ca(2+), Mn(2+), and Mg(2+), with a high permeability for Ca(2+). However, can be enhanced by increasing temperature and by ligands, including the endogenous neurosteroid pregnenolone sulfate and sphingosine-1 and suppressed by intracellular Mg(2+). Implicated in a variety of cellular processes, including insulin/peptide secretion, vascular constriction and dilation, noxious heat sensing, inflammatory and spontaneous pain sensitivity. In neurons of the dorsal root ganglia, functions as thermosensitive channel for the detection of noxious heat and spontaneous pain. Suggested to function as an ionotropic steroid receptor in beta-cell, indeed pregnenolone sulfate leads to Ca(2+) influx and enhanced insulin secretion. Mediates Zn(2+) uptake into the lumen of pancreatic beta cell secretory granules, thereby regulating insulin secretion. Forms heteromultimeric ion channels with TRPM1 which are permeable for Ca(2+) and Zn(2+) ions. Exists as multiple splice variants which differ significantly in their biophysical properties. This is Transient receptor potential cation channel subfamily M member 3 from Homo sapiens (Human).